Here is a 112-residue protein sequence, read N- to C-terminus: Large ribosomal subunit protein uL1 (112 aa).

This sequence belongs to the universal ribosomal protein uL1 family.

In Caenorhabditis remanei (Caenorhabditis vulgaris), this protein is Large ribosomal subunit protein uL1 (rpl-10a).